The primary structure comprises 632 residues: DNA topoisomerase 4 subunit B (632 aa).

Residues Tyr5, Asn42, Asp69, 110–116, and Lys334 contribute to the ATP site; that span reads GLHGVGI. One can recognise a Toprim domain in the interval 412–525; the sequence is TELFLVEGDS…DGHVYVAMPP (114 aa). Glu418, Asp490, and Asp492 together coordinate Mg(2+).

It belongs to the type II topoisomerase family. ParE type 1 subfamily. As to quaternary structure, heterotetramer composed of ParC and ParE. The cofactor is Mg(2+). It depends on Mn(2+) as a cofactor. Ca(2+) is required as a cofactor.

The enzyme catalyses ATP-dependent breakage, passage and rejoining of double-stranded DNA.. Its function is as follows. Topoisomerase IV is essential for chromosome segregation. It relaxes supercoiled DNA. Performs the decatenation events required during the replication of a circular DNA molecule. In Haemophilus influenzae (strain ATCC 51907 / DSM 11121 / KW20 / Rd), this protein is DNA topoisomerase 4 subunit B.